The following is a 368-amino-acid chain: DNA replication and repair protein RecF (368 aa).

Position 30-37 (30-37) interacts with ATP; that stretch reads GNNAQGKT.

The protein belongs to the RecF family.

The protein localises to the cytoplasm. Functionally, the RecF protein is involved in DNA metabolism; it is required for DNA replication and normal SOS inducibility. RecF binds preferentially to single-stranded, linear DNA. It also seems to bind ATP. This chain is DNA replication and repair protein RecF, found in Streptococcus pyogenes serotype M18 (strain MGAS8232).